Here is a 240-residue protein sequence, read N- to C-terminus: 3-deoxy-D-manno-octulosonic acid kinase (240 aa).

Asp170 is a catalytic residue.

The protein belongs to the protein kinase superfamily. KdkA/RfaP family.

It is found in the cell inner membrane. It catalyses the reaction an alpha-Kdo-(2-&gt;6)-lipid IVA + ATP = a 4-O-phospho-alpha-Kdo-(2-&gt;6)-lipid IVA + ADP + H(+). The protein operates within bacterial outer membrane biogenesis; LPS core biosynthesis. Functionally, catalyzes the ATP-dependent phosphorylation of the 3-deoxy-D-manno-octulosonic acid (Kdo) residue in Kdo-lipid IV(A) at the 4-OH position. The polypeptide is 3-deoxy-D-manno-octulosonic acid kinase (Mannheimia succiniciproducens (strain KCTC 0769BP / MBEL55E)).